A 547-amino-acid chain; its full sequence is Chaperonin GroEL (547 aa).

ATP contacts are provided by residues Thr-30 to Pro-33, Lys-51, Asp-87 to Thr-91, Gly-415, and Asp-496.

This sequence belongs to the chaperonin (HSP60) family. As to quaternary structure, forms a cylinder of 14 subunits composed of two heptameric rings stacked back-to-back. Interacts with the co-chaperonin GroES.

The protein localises to the cytoplasm. It catalyses the reaction ATP + H2O + a folded polypeptide = ADP + phosphate + an unfolded polypeptide.. Its function is as follows. Together with its co-chaperonin GroES, plays an essential role in assisting protein folding. The GroEL-GroES system forms a nano-cage that allows encapsulation of the non-native substrate proteins and provides a physical environment optimized to promote and accelerate protein folding. This is Chaperonin GroEL from Actinobacillus pleuropneumoniae (Haemophilus pleuropneumoniae).